The chain runs to 150 residues: Avidin-related protein 3 (150 aa).

The signal sequence occupies residues 1–24; that stretch reads MVHTTSPLLLLLLLSLALVAPSLS. The Avidin-like domain maps to 26–147; it reads RKCSLTGKWT…GYNNFTRQRT (122 aa). C28 and C105 are oxidised to a cystine. Residues N36, S40, Y57, T59, and D63 each contribute to the biotin site. An N-linked (GlcNAc...) asparagine glycan is attached at N93. Positions 95, 99, and 140 each coordinate biotin. N-linked (GlcNAc...) asparagine glycosylation occurs at N141.

The protein belongs to the avidin/streptavidin family. As to quaternary structure, homotetramer. Glycosylated.

Its subcellular location is the secreted. Functionally, forms a strong non-covalent specific complex with biotin. This is Avidin-related protein 3 (AVR3) from Gallus gallus (Chicken).